Consider the following 430-residue polypeptide: Nucleoporin NUP42 (430 aa).

Residues 1-68 (MSAFGNPFTS…AFGMPQFGTN (68 aa)) are disordered. An SXFG 1 repeat occupies 2–5 (SAFG). Residues 15-36 (NLSNTSGINPFTNNAASTNNMG) show a composition bias toward polar residues. SAFGXPXFG repeat units lie at residues 38–46 (SAFGRPSFG) and 58–66 (SAFGMPQFG). Low complexity predominate over residues 45–68 (FGTANTMTGGTTTSAFGMPQFGTN). An SXFG 2 repeat occupies 78-81 (SAFG). SAFGXPXFG repeat units follow at residues 90–98 (SAFGAPAFG) and 112–120 (SAFGAPSFG). The segment at 121-230 (STGFGAMAAT…QNTSTSSGTG (110 aa)) is interactions with CRM1 and GFD1. FG repeat units lie at residues 124-125 (FG) and 134-135 (FG). At Ser137 the chain carries Phosphoserine. Residues 143 to 151 (SAFGQPAFG) form an SAFGXPXFG 5 repeat. SXFG repeat units follow at residues 168–171 (SAFG) and 182–185 (SPFG). Residues 180–294 (TTSPFGSLQQ…QSPFSGGSGG (115 aa)) are disordered. Residues 186-201 (SLQQNASQNASSTSSA) show a composition bias toward low complexity. Residues 200–208 (SAFGKPTFG) form an SAFGXPXFG 6 repeat. Residues 209 to 230 (AATNTQSPFGTIQNTSTSSGTG) are compositionally biased toward polar residues. SXFG repeat units lie at residues 215 to 218 (SPFG) and 232 to 235 (SPFG). 2 stretches are compositionally biased toward polar residues: residues 237 to 252 (FGTN…NLQS) and 260 to 285 (PFGT…TNNQ). 2 SXFG repeats span residues 259-262 (SPFG) and 277-280 (SAFG). Residues 296 to 297 (FG) form an FG 3 repeat. The residue at position 298 (Ser298) is a Phosphoserine. The SXFG 9 repeat unit spans residues 312 to 315 (SSFG). FG repeat units follow at residues 319 to 322 (FSFG), 339 to 340 (FG), and 361 to 364 (FGFG). The tract at residues 319–346 (FSFGITPQNDANKVSQSNPSFGQTMPNT) is disordered. The span at 323-346 (ITPQNDANKVSQSNPSFGQTMPNT) shows a compositional bias: polar residues. Residues 365–430 (QQQMNATNVN…DIPPPPALVA (66 aa)) are interaction with GLE1.

In terms of assembly, component of the nuclear pore complex (NPC). NPC constitutes the exclusive means of nucleocytoplasmic transport. NPCs allow the passive diffusion of ions and small molecules and the active, nuclear transport receptor-mediated bidirectional transport of macromolecules such as proteins, RNAs, ribonucleoparticles (RNPs), and ribosomal subunits across the nuclear envelope. Due to its 8-fold rotational symmetry, all subunits are present with 8 copies or multiples thereof. NUP42 interacts with the NUP82 subcomplex. It interacts directly with GLE1, and through its FG repeats with GFD1, the heterodimeric mRNA transport factor MEX67/MTR2, and the karyopherin CRM1.

It is found in the nucleus. Its subcellular location is the nuclear pore complex. It localises to the nucleus membrane. Functionally, functions as a component of the nuclear pore complex (NPC). NPC components, collectively referred to as nucleoporins (NUPs), can play the role of both NPC structural components and of docking or interaction partners for transiently associated nuclear transport factors. Active directional transport is assured by both, a Phe-Gly (FG) repeat affinity gradient for these transport factors across the NPC and a transport cofactor concentration gradient across the nuclear envelope (GSP1 and GSP2 GTPases associated predominantly with GTP in the nucleus, with GDP in the cytoplasm). NUP42 is specifically important for nuclear protein and mRNA export. The protein is Nucleoporin NUP42 (NUP42) of Saccharomyces cerevisiae (strain ATCC 204508 / S288c) (Baker's yeast).